A 523-amino-acid polypeptide reads, in one-letter code: 2-isopropylmalate synthase (523 aa).

Residues 5-267 form the Pyruvate carboxyltransferase domain; sequence VIIFDTTLRD…ETGINAKEIH (263 aa). Asp14, His202, His204, and Asn238 together coordinate Mn(2+). The interval 392-523 is regulatory domain; the sequence is GLQQLVVHSD…KQARTELGGV (132 aa).

Belongs to the alpha-IPM synthase/homocitrate synthase family. LeuA type 1 subfamily. Homodimer. Mn(2+) is required as a cofactor.

Its subcellular location is the cytoplasm. It carries out the reaction 3-methyl-2-oxobutanoate + acetyl-CoA + H2O = (2S)-2-isopropylmalate + CoA + H(+). Its pathway is amino-acid biosynthesis; L-leucine biosynthesis; L-leucine from 3-methyl-2-oxobutanoate: step 1/4. In terms of biological role, catalyzes the condensation of the acetyl group of acetyl-CoA with 3-methyl-2-oxobutanoate (2-ketoisovalerate) to form 3-carboxy-3-hydroxy-4-methylpentanoate (2-isopropylmalate). This is 2-isopropylmalate synthase from Shewanella loihica (strain ATCC BAA-1088 / PV-4).